We begin with the raw amino-acid sequence, 227 residues long: Cytochrome c oxidase subunit 2 (227 aa).

The Mitochondrial intermembrane portion of the chain corresponds to 1–14; the sequence is MAYPMQLGFQDATS. A helical transmembrane segment spans residues 15 to 45; sequence PIMEELLHFHDHTLMIVFLISSLVLYIISLM. Over 46 to 59 the chain is Mitochondrial matrix; the sequence is LTTKLTHTSTMDAQ. Residues 60-87 traverse the membrane as a helical segment; sequence EVETIWTILPAIILILIALPSLRILYMM. Residues 88-227 are Mitochondrial intermembrane-facing; that stretch reads DEINNPSLTV…YFEKWSASML (140 aa). Residues H161, C196, E198, C200, H204, and M207 each contribute to the Cu cation site. A Mg(2+)-binding site is contributed by E198. Y218 is modified (phosphotyrosine).

This sequence belongs to the cytochrome c oxidase subunit 2 family. Component of the cytochrome c oxidase (complex IV, CIV), a multisubunit enzyme composed of 14 subunits. The complex is composed of a catalytic core of 3 subunits MT-CO1, MT-CO2 and MT-CO3, encoded in the mitochondrial DNA, and 11 supernumerary subunits COX4I, COX5A, COX5B, COX6A, COX6B, COX6C, COX7A, COX7B, COX7C, COX8 and NDUFA4, which are encoded in the nuclear genome. The complex exists as a monomer or a dimer and forms supercomplexes (SCs) in the inner mitochondrial membrane with NADH-ubiquinone oxidoreductase (complex I, CI) and ubiquinol-cytochrome c oxidoreductase (cytochrome b-c1 complex, complex III, CIII), resulting in different assemblies (supercomplex SCI(1)III(2)IV(1) and megacomplex MCI(2)III(2)IV(2)). Found in a complex with TMEM177, COA6, COX18, COX20, SCO1 and SCO2. Interacts with TMEM177 in a COX20-dependent manner. Interacts with COX20. Interacts with COX16. The cofactor is Cu cation.

Its subcellular location is the mitochondrion inner membrane. The catalysed reaction is 4 Fe(II)-[cytochrome c] + O2 + 8 H(+)(in) = 4 Fe(III)-[cytochrome c] + 2 H2O + 4 H(+)(out). Component of the cytochrome c oxidase, the last enzyme in the mitochondrial electron transport chain which drives oxidative phosphorylation. The respiratory chain contains 3 multisubunit complexes succinate dehydrogenase (complex II, CII), ubiquinol-cytochrome c oxidoreductase (cytochrome b-c1 complex, complex III, CIII) and cytochrome c oxidase (complex IV, CIV), that cooperate to transfer electrons derived from NADH and succinate to molecular oxygen, creating an electrochemical gradient over the inner membrane that drives transmembrane transport and the ATP synthase. Cytochrome c oxidase is the component of the respiratory chain that catalyzes the reduction of oxygen to water. Electrons originating from reduced cytochrome c in the intermembrane space (IMS) are transferred via the dinuclear copper A center (CU(A)) of subunit 2 and heme A of subunit 1 to the active site in subunit 1, a binuclear center (BNC) formed by heme A3 and copper B (CU(B)). The BNC reduces molecular oxygen to 2 water molecules using 4 electrons from cytochrome c in the IMS and 4 protons from the mitochondrial matrix. The chain is Cytochrome c oxidase subunit 2 (MT-CO2) from Syncerus caffer (African buffalo).